The primary structure comprises 984 residues: MYCBP-associated protein (984 aa).

2 disordered regions span residues 61-88 (LEAS…EEPE) and 218-240 (GESK…PQHN). A compositionally biased stretch (basic and acidic residues) spans 218 to 231 (GESKQKAPKEEKRP). Residue Thr613 is modified to Phosphothreonine. Residue Ser619 is modified to Phosphoserine. Disordered regions lie at residues 693–729 (SPIS…KSIM) and 842–917 (PEEQ…ASQD). Over residues 862 to 910 (AGKEERKGAAQEKKQLGIKDKEDKKGAKLLGKEDRPNSKKHKAKDDKKV) the composition is skewed to basic and acidic residues.

In terms of assembly, interacts with MYCBP. As to expression, expressed specifically in testis.

It is found in the cytoplasm. Its subcellular location is the membrane. Functionally, may play a role in spermatogenesis. May be involved in synaptic processes. The polypeptide is MYCBP-associated protein (Homo sapiens (Human)).